Here is a 163-residue protein sequence, read N- to C-terminus: Crossover junction endodeoxyribonuclease RuvC (163 aa).

Residues aspartate 4, glutamate 65, and aspartate 138 contribute to the active site. Mg(2+) contacts are provided by aspartate 4, glutamate 65, and aspartate 138.

Belongs to the RuvC family. Homodimer which binds Holliday junction (HJ) DNA. The HJ becomes 2-fold symmetrical on binding to RuvC with unstacked arms; it has a different conformation from HJ DNA in complex with RuvA. In the full resolvosome a probable DNA-RuvA(4)-RuvB(12)-RuvC(2) complex forms which resolves the HJ. The cofactor is Mg(2+).

It is found in the cytoplasm. The catalysed reaction is Endonucleolytic cleavage at a junction such as a reciprocal single-stranded crossover between two homologous DNA duplexes (Holliday junction).. In terms of biological role, the RuvA-RuvB-RuvC complex processes Holliday junction (HJ) DNA during genetic recombination and DNA repair. Endonuclease that resolves HJ intermediates. Cleaves cruciform DNA by making single-stranded nicks across the HJ at symmetrical positions within the homologous arms, yielding a 5'-phosphate and a 3'-hydroxyl group; requires a central core of homology in the junction. The consensus cleavage sequence is 5'-(A/T)TT(C/G)-3'. Cleavage occurs on the 3'-side of the TT dinucleotide at the point of strand exchange. HJ branch migration catalyzed by RuvA-RuvB allows RuvC to scan DNA until it finds its consensus sequence, where it cleaves and resolves the cruciform DNA. This is Crossover junction endodeoxyribonuclease RuvC from Corynebacterium diphtheriae (strain ATCC 700971 / NCTC 13129 / Biotype gravis).